A 130-amino-acid polypeptide reads, in one-letter code: MAQVQYSGTGRRKNAVARVRLVPGTGKITVNKKDVEEYIPHADLREVINQPFGVTETKGAYDVIVNVNGGGYAGQSGAIRHGIARALLQVDPDFRSALKRAGLLTRDARMVERKKPGLKKARKASQFSKR.

Belongs to the universal ribosomal protein uS9 family.

The sequence is that of Small ribosomal subunit protein uS9 from Enterococcus faecalis (strain ATCC 700802 / V583).